Here is a 161-residue protein sequence, read N- to C-terminus: Protein-export protein SecB (161 aa).

The protein belongs to the SecB family. As to quaternary structure, homotetramer, a dimer of dimers. One homotetramer interacts with 1 SecA dimer.

Its subcellular location is the cytoplasm. Its function is as follows. One of the proteins required for the normal export of preproteins out of the cell cytoplasm. It is a molecular chaperone that binds to a subset of precursor proteins, maintaining them in a translocation-competent state. It also specifically binds to its receptor SecA. The polypeptide is Protein-export protein SecB (Pseudomonas putida (strain ATCC 700007 / DSM 6899 / JCM 31910 / BCRC 17059 / LMG 24140 / F1)).